The sequence spans 275 residues: Formamidopyrimidine-DNA glycosylase (275 aa).

Residue P2 is the Schiff-base intermediate with DNA of the active site. E3 acts as the Proton donor in catalysis. The Proton donor; for beta-elimination activity role is filled by K58. H93, R111, and R156 together coordinate DNA. An FPG-type zinc finger spans residues 241-275 (FVYDRAGQPCRVCGTPVRQIVQGQRSTYFCPTCQR). Catalysis depends on R265, which acts as the Proton donor; for delta-elimination activity.

This sequence belongs to the FPG family. Monomer. Zn(2+) is required as a cofactor.

It catalyses the reaction Hydrolysis of DNA containing ring-opened 7-methylguanine residues, releasing 2,6-diamino-4-hydroxy-5-(N-methyl)formamidopyrimidine.. It carries out the reaction 2'-deoxyribonucleotide-(2'-deoxyribose 5'-phosphate)-2'-deoxyribonucleotide-DNA = a 3'-end 2'-deoxyribonucleotide-(2,3-dehydro-2,3-deoxyribose 5'-phosphate)-DNA + a 5'-end 5'-phospho-2'-deoxyribonucleoside-DNA + H(+). Functionally, involved in base excision repair of DNA damaged by oxidation or by mutagenic agents. Acts as a DNA glycosylase that recognizes and removes damaged bases. Has a preference for oxidized purines, such as 7,8-dihydro-8-oxoguanine (8-oxoG). Has AP (apurinic/apyrimidinic) lyase activity and introduces nicks in the DNA strand. Cleaves the DNA backbone by beta-delta elimination to generate a single-strand break at the site of the removed base with both 3'- and 5'-phosphates. This is Formamidopyrimidine-DNA glycosylase from Burkholderia cenocepacia (strain HI2424).